The primary structure comprises 440 residues: C4-dicarboxylate TRAP transporter large permease protein DctM (440 aa).

13 consecutive transmembrane segments (helical) span residues 4 to 24, 54 to 74, 89 to 109, 112 to 132, 148 to 168, 181 to 201, 230 to 250, 255 to 275, 291 to 311, 318 to 338, 349 to 369, 370 to 390, and 410 to 430; these read LIIF…SISL, FEIM…HGGV, WHGG…AVSG, PATV…QGFP, ILIP…GMVV, VGEL…FLAF, AAWG…GIFT, AAMS…DLTL, MLLY…HEGI, WMVN…ILLL, IVLI…IDPV, HFGI…PVGL, and VWPW…VPAI.

It belongs to the TRAP transporter large permease family. In terms of assembly, the complex comprises the extracytoplasmic solute receptor protein DctP, and the two transmembrane proteins DctQ and DctM.

The protein resides in the cell inner membrane. Functionally, part of the tripartite ATP-independent periplasmic (TRAP) transport system DctPQM involved in C4-dicarboxylates uptake. This Rhodobacter capsulatus (Rhodopseudomonas capsulata) protein is C4-dicarboxylate TRAP transporter large permease protein DctM.